Consider the following 489-residue polypeptide: Rhamnulokinase (489 aa).

13–17 contacts ATP; that stretch reads ASSGR. A disulfide bridge connects residues Cys68 and Cys222. Residues Gly83 and 236–238 each bind substrate; that span reads HDT. The active-site Proton acceptor is the Asp237. Thr259 is an ATP binding site. Asn296 provides a ligand contact to substrate. Gln304 lines the ATP pocket. Cys353 and Cys370 form a disulfide bridge. Gly402 provides a ligand contact to ATP. An intrachain disulfide couples Cys413 to Cys417.

It belongs to the rhamnulokinase family. Requires Mg(2+) as cofactor.

The catalysed reaction is L-rhamnulose + ATP = L-rhamnulose 1-phosphate + ADP + H(+). It functions in the pathway carbohydrate degradation; L-rhamnose degradation; glycerone phosphate from L-rhamnose: step 2/3. Functionally, involved in the catabolism of L-rhamnose (6-deoxy-L-mannose). Catalyzes the transfer of the gamma-phosphate group from ATP to the 1-hydroxyl group of L-rhamnulose to yield L-rhamnulose 1-phosphate. The sequence is that of Rhamnulokinase from Salmonella enteritidis PT4 (strain P125109).